We begin with the raw amino-acid sequence, 340 residues long: GTPase Obg (340 aa).

One can recognise an Obg domain in the interval 1–159; the sequence is MRFIDKAKIH…RWIELELKLI (159 aa). The OBG-type G domain maps to 160 to 331; that stretch reads ADIGIIGFPN…LIKLIAEVYE (172 aa). GTP is bound by residues 166–173, 191–195, 213–216, 283–286, and 312–314; these read GFPNAGKS, FTTLT, DIPG, NKID, and SLV. S173 and T193 together coordinate Mg(2+).

The protein belongs to the TRAFAC class OBG-HflX-like GTPase superfamily. OBG GTPase family. Monomer. Mg(2+) serves as cofactor.

It is found in the cytoplasm. Its function is as follows. An essential GTPase which binds GTP, GDP and possibly (p)ppGpp with moderate affinity, with high nucleotide exchange rates and a fairly low GTP hydrolysis rate. Plays a role in control of the cell cycle, stress response, ribosome biogenesis and in those bacteria that undergo differentiation, in morphogenesis control. This chain is GTPase Obg, found in Persephonella marina (strain DSM 14350 / EX-H1).